The following is a 946-amino-acid chain: Glycine dehydrogenase (decarboxylating) (946 aa).

N6-(pyridoxal phosphate)lysine is present on lysine 700.

It belongs to the GcvP family. The glycine cleavage system is composed of four proteins: P, T, L and H. Pyridoxal 5'-phosphate is required as a cofactor.

It catalyses the reaction N(6)-[(R)-lipoyl]-L-lysyl-[glycine-cleavage complex H protein] + glycine + H(+) = N(6)-[(R)-S(8)-aminomethyldihydrolipoyl]-L-lysyl-[glycine-cleavage complex H protein] + CO2. Its function is as follows. The glycine cleavage system catalyzes the degradation of glycine. The P protein binds the alpha-amino group of glycine through its pyridoxal phosphate cofactor; CO(2) is released and the remaining methylamine moiety is then transferred to the lipoamide cofactor of the H protein. The chain is Glycine dehydrogenase (decarboxylating) from Pseudomonas fluorescens (strain SBW25).